The following is an 858-amino-acid chain: Heat shock protein 105 kDa (858 aa).

Residue Ser2 is modified to N-acetylserine. Lys471 is subject to N6-acetyllysine. Disordered stretches follow at residues 500–585 (KVPT…PPEA) and 801–858 (VTQP…MDLD). Residues 504 to 515 (EEEDGSSLEADM) show a composition bias toward acidic residues. Residues Ser509 and Ser510 each carry the phosphoserine modification. A compositionally biased stretch (polar residues) spans 533-549 (QQDNSEAGTQPQVQTDG). Position 558 is a phosphoserine (Ser558). Thr562 is subject to Phosphothreonine. Basic and acidic residues-rich tracts occupy residues 564 to 585 (EESK…PPEA) and 806 to 815 (PKIESPKLER). Phosphoserine is present on Ser810. Thr816 is modified (phosphothreonine).

Belongs to the heat shock protein 70 family. In terms of assembly, interacts with HSPA8/HSC70. Interacts with HSPA1A (via NBD) and HSPA1B (via NBD). In terms of processing, phosphorylation on Ser-509 may be important for regulation of the HSPA8/HSC70 chaperone activity. In terms of tissue distribution, expressed in neurons in the cerebrum and Purkinje cells in the cerebellum (at protein level). Expressed in testis and no expression or only low-level expression in liver, spleen, lung, and kidney (at protein level). Highly expressed in the brain and moderately expressed in lung, heart, thymus, spleen, liver, and small intestine.

Its subcellular location is the cytoplasm. It is found in the nucleus. Its function is as follows. Acts as a nucleotide-exchange factor (NEF) for chaperone proteins HSPA1A and HSPA1B, promoting the release of ADP from HSPA1A/B thereby triggering client/substrate protein release. Prevents the aggregation of denatured proteins in cells under severe stress, on which the ATP levels decrease markedly. Inhibits HSPA8/HSC70 ATPase and chaperone activities. This is Heat shock protein 105 kDa (Hsph1) from Mus musculus (Mouse).